The chain runs to 281 residues: Nucleoid occlusion protein (281 aa).

The interval 1–26 is disordered; sequence MKHPFSRLFSFGEKEQEEAGGKQERE. The span at 12–26 shows a compositional bias: basic and acidic residues; sequence GEKEQEEAGGKQERE. Positions 145–164 form a DNA-binding region, H-T-H motif; that stretch reads EALAQRLGKGQSTIANKLRL.

The protein belongs to the ParB family.

The protein localises to the cytoplasm. It localises to the nucleoid. Effects nucleoid occlusion by binding relatively nonspecifically to DNA and preventing the assembly of the division machinery in the vicinity of the nucleoid, especially under conditions that disturb the cell cycle. It helps to coordinate cell division and chromosome segregation by preventing the formation of the Z ring through the nucleoid, which would cause chromosome breakage. The protein is Nucleoid occlusion protein of Geobacillus thermodenitrificans (strain NG80-2).